The primary structure comprises 954 residues: Valine--tRNA ligase (954 aa).

A 'HIGH' region motif is present at residues 48–58 (PNVTGSLHMGH). The short motif at 560 to 564 (KMSKS) is the 'KMSKS' region element. Lys563 contacts ATP. Positions 883–953 (AGFINKEAEL…IQEQYKAIEA (71 aa)) form a coiled coil.

Belongs to the class-I aminoacyl-tRNA synthetase family. ValS type 1 subfamily. Monomer.

The protein resides in the cytoplasm. It catalyses the reaction tRNA(Val) + L-valine + ATP = L-valyl-tRNA(Val) + AMP + diphosphate. Functionally, catalyzes the attachment of valine to tRNA(Val). As ValRS can inadvertently accommodate and process structurally similar amino acids such as threonine, to avoid such errors, it has a 'posttransfer' editing activity that hydrolyzes mischarged Thr-tRNA(Val) in a tRNA-dependent manner. This chain is Valine--tRNA ligase, found in Haemophilus influenzae (strain 86-028NP).